Consider the following 134-residue polypeptide: Retinoid-binding protein 7 (134 aa).

Belongs to the calycin superfamily. Fatty-acid binding protein (FABP) family. Expressed primarily in kidney, heart and transverse colon. Detected in adult lymph node, appendix, ascending colon, and in fetal heart and spleen.

It localises to the cytoplasm. Functionally, intracellular transport of retinol. The chain is Retinoid-binding protein 7 (RBP7) from Homo sapiens (Human).